The following is a 593-amino-acid chain: Aspartate--tRNA(Asp/Asn) ligase (593 aa).

Position 176 (glutamate 176) interacts with L-aspartate. Residues 200–203 (QIFK) are aspartate. An L-aspartate-binding site is contributed by arginine 222. ATP-binding positions include 222–224 (RDE) and glutamine 231. Histidine 450 is an L-aspartate binding site. Residue glutamate 490 participates in ATP binding. L-aspartate is bound at residue arginine 497. 542-545 (GLDR) provides a ligand contact to ATP.

It belongs to the class-II aminoacyl-tRNA synthetase family. Type 1 subfamily. In terms of assembly, homodimer.

It is found in the cytoplasm. The enzyme catalyses tRNA(Asx) + L-aspartate + ATP = L-aspartyl-tRNA(Asx) + AMP + diphosphate. Functionally, aspartyl-tRNA synthetase with relaxed tRNA specificity since it is able to aspartylate not only its cognate tRNA(Asp) but also tRNA(Asn). Reaction proceeds in two steps: L-aspartate is first activated by ATP to form Asp-AMP and then transferred to the acceptor end of tRNA(Asp/Asn). The polypeptide is Aspartate--tRNA(Asp/Asn) ligase (Symbiobacterium thermophilum (strain DSM 24528 / JCM 14929 / IAM 14863 / T)).